Reading from the N-terminus, the 1488-residue chain is Chromosome partition protein MukB (1488 aa).

Residue 34–41 (GGNGAGKS) coordinates ATP. 3 coiled-coil regions span residues 326 to 418 (LEAD…QYNQ), 444 to 472 (LDTFQAKEQEATEKLLSLEQKMSVAQTAH), and 509 to 602 (RHLA…QRAP). A flexible hinge region spans residues 666-783 (PGGAEDQRLN…SLPIFGRAAR (118 aa)). Coiled-coil stretches lie at residues 835 to 923 (EAEI…AKLE), 977 to 1116 (EMLS…AKAG), and 1209 to 1265 (VEAI…LQSV). Residues 1049–1074 (ADSGAEERARQRRDELHAQLSNNRSR) are disordered. Basic and acidic residues predominate over residues 1051-1065 (SGAEERARQRRDELH).

Belongs to the SMC family. MukB subfamily. As to quaternary structure, homodimerization via its hinge domain. Binds to DNA via its C-terminal region. Interacts, and probably forms a ternary complex, with MukE and MukF via its C-terminal region. The complex formation is stimulated by calcium or magnesium. Interacts with tubulin-related protein FtsZ.

The protein localises to the cytoplasm. Its subcellular location is the nucleoid. Plays a central role in chromosome condensation, segregation and cell cycle progression. Functions as a homodimer, which is essential for chromosome partition. Involved in negative DNA supercoiling in vivo, and by this means organize and compact chromosomes. May achieve or facilitate chromosome segregation by condensation DNA from both sides of a centrally located replisome during cell division. The polypeptide is Chromosome partition protein MukB (Salmonella typhimurium (strain LT2 / SGSC1412 / ATCC 700720)).